The following is a 168-amino-acid chain: Large ribosomal subunit protein uL5 (168 aa).

It belongs to the universal ribosomal protein uL5 family. In terms of assembly, part of the 50S ribosomal subunit; contacts the 5S rRNA and probably tRNA. Forms a bridge to the 30S subunit in the 70S ribosome.

Functionally, this is one of the proteins that bind and probably mediate the attachment of the 5S RNA into the large ribosomal subunit, where it forms part of the central protuberance. In the 70S ribosome it contacts protein S13 of the 30S subunit (bridge B1b), connecting the 2 subunits; this bridge is implicated in subunit movement. May contact the P site tRNA; the 5S rRNA and some of its associated proteins might help stabilize positioning of ribosome-bound tRNAs. This Methanospirillum hungatei JF-1 (strain ATCC 27890 / DSM 864 / NBRC 100397 / JF-1) protein is Large ribosomal subunit protein uL5.